Here is a 345-residue protein sequence, read N- to C-terminus: Phosphoribosylformylglycinamidine cyclo-ligase (345 aa).

This sequence belongs to the AIR synthase family.

It is found in the cytoplasm. The enzyme catalyses 2-formamido-N(1)-(5-O-phospho-beta-D-ribosyl)acetamidine + ATP = 5-amino-1-(5-phospho-beta-D-ribosyl)imidazole + ADP + phosphate + H(+). Its pathway is purine metabolism; IMP biosynthesis via de novo pathway; 5-amino-1-(5-phospho-D-ribosyl)imidazole from N(2)-formyl-N(1)-(5-phospho-D-ribosyl)glycinamide: step 2/2. The polypeptide is Phosphoribosylformylglycinamidine cyclo-ligase (Shewanella sediminis (strain HAW-EB3)).